Here is a 138-residue protein sequence, read N- to C-terminus: Acidic phospholipase A2 ammodytin I1 (138 aa).

An N-terminal signal peptide occupies residues 1-16 (MRILWIVAVCLIGAEG). Cystine bridges form between C42-C131, C44-C60, C59-C111, C65-C138, C66-C104, C73-C97, and C91-C102. Positions 43, 45, and 47 each coordinate Ca(2+). The active site involves H63. Ca(2+) is bound at residue D64. D105 is a catalytic residue.

This sequence belongs to the phospholipase A2 family. Group II subfamily. D49 sub-subfamily. Requires Ca(2+) as cofactor. Expressed by the venom gland.

The protein localises to the secreted. The enzyme catalyses a 1,2-diacyl-sn-glycero-3-phosphocholine + H2O = a 1-acyl-sn-glycero-3-phosphocholine + a fatty acid + H(+). Functionally, snake venom phospholipase A2 (PLA2) that has enzymatic activity but is non-toxic. PLA2 catalyzes the calcium-dependent hydrolysis of the 2-acyl groups in 3-sn-phosphoglycerides. This chain is Acidic phospholipase A2 ammodytin I1, found in Vipera ammodytes ammodytes (Western sand viper).